The sequence spans 492 residues: MTLRVTNTLTGEKEPFEPRDPDSVLLYYCGLTTSDPPHLGHARGWVHVDVMARWLDYLGYDVHHVENLTDVNEKIVARVGEDGDSEADVARHYVQQAIDDMRSLNLGRAEVYPRVSEHVPEIIDLVERLIEQGHAYEQNGSVYFDVTSFEDYGKLSNQSVDDIESQGADTEGEKRHPADFALWKAGGVDPADIAEHQHPEAAPAEEACQTAQIWDSPWGEGRPGWHIECSAMSMTHLDESIDIHVGGQDLVFPHHENEVAQSEAATGKQFANYWLHVRLLETEEEKMSSSLGNYFTVADAVEEFGPDVLRTFLLSTAYTSRATYSDETIAEAKERWDRLSRGYERAVEACDDVDAHTKVTDETLRDAVEDARSAFEAALNDDFNTREAMTALLDLTAAVNTHVDGHDEYDYQGLRRAVETFEEFGGGILGLAFGDDDSGDVSLAGDVVDLVLTVRQQEREAGNYERADELRDELEALGVEVQDTDDGPTYRL.

Position 29 (cysteine 29) interacts with Zn(2+). The 'HIGH' region motif lies at 31–41 (LTTSDPPHLGH). The Zn(2+) site is built by cysteine 229, histidine 254, and glutamate 258. Residues 286-290 (KMSSS) carry the 'KMSKS' region motif.

Belongs to the class-I aminoacyl-tRNA synthetase family. Requires Zn(2+) as cofactor.

It is found in the cytoplasm. The enzyme catalyses tRNA(Cys) + L-cysteine + ATP = L-cysteinyl-tRNA(Cys) + AMP + diphosphate. This is Cysteine--tRNA ligase from Haloarcula marismortui (strain ATCC 43049 / DSM 3752 / JCM 8966 / VKM B-1809) (Halobacterium marismortui).